A 270-amino-acid chain; its full sequence is uncharacterized protein (270 aa).

Positions 1-22 (MEYIKKIALYMSVLLLIIFIGG) are cleaved as a signal peptide. The N-palmitoyl cysteine moiety is linked to residue Cys23. Residue Cys23 is the site of S-diacylglycerol cysteine attachment.

It belongs to the staphylococcal tandem lipoprotein family.

It localises to the cell membrane. This is an uncharacterized protein from Staphylococcus aureus (strain USA300).